A 425-amino-acid polypeptide reads, in one-letter code: Multifunctional CCA protein (425 aa).

Positions 8 and 11 each coordinate ATP. Positions 8 and 11 each coordinate CTP. Positions 21 and 23 each coordinate Mg(2+). Arg91, Arg141, and Arg144 together coordinate ATP. 3 residues coordinate CTP: Arg91, Arg141, and Arg144. An HD domain is found at 230-331 (TGVHLMMVLD…VRLLERCDAI (102 aa)).

The protein belongs to the tRNA nucleotidyltransferase/poly(A) polymerase family. Bacterial CCA-adding enzyme type 1 subfamily. In terms of assembly, monomer. Can also form homodimers and oligomers. Mg(2+) serves as cofactor. Requires Ni(2+) as cofactor.

It catalyses the reaction a tRNA precursor + 2 CTP + ATP = a tRNA with a 3' CCA end + 3 diphosphate. The enzyme catalyses a tRNA with a 3' CCA end + 2 CTP + ATP = a tRNA with a 3' CCACCA end + 3 diphosphate. Catalyzes the addition and repair of the essential 3'-terminal CCA sequence in tRNAs without using a nucleic acid template. Adds these three nucleotides in the order of C, C, and A to the tRNA nucleotide-73, using CTP and ATP as substrates and producing inorganic pyrophosphate. tRNA 3'-terminal CCA addition is required both for tRNA processing and repair. Also involved in tRNA surveillance by mediating tandem CCA addition to generate a CCACCA at the 3' terminus of unstable tRNAs. While stable tRNAs receive only 3'-terminal CCA, unstable tRNAs are marked with CCACCA and rapidly degraded. In Acidovorax sp. (strain JS42), this protein is Multifunctional CCA protein.